A 455-amino-acid chain; its full sequence is Exodeoxyribonuclease 7 large subunit (455 aa).

The protein belongs to the XseA family. Heterooligomer composed of large and small subunits.

It localises to the cytoplasm. The enzyme catalyses Exonucleolytic cleavage in either 5'- to 3'- or 3'- to 5'-direction to yield nucleoside 5'-phosphates.. In terms of biological role, bidirectionally degrades single-stranded DNA into large acid-insoluble oligonucleotides, which are then degraded further into small acid-soluble oligonucleotides. The polypeptide is Exodeoxyribonuclease 7 large subunit (Escherichia coli O7:K1 (strain IAI39 / ExPEC)).